The following is a 274-amino-acid chain: Thiazole synthase (274 aa).

Catalysis depends on lysine 115, which acts as the Schiff-base intermediate with DXP. 1-deoxy-D-xylulose 5-phosphate-binding positions include glycine 176, 202–203 (AG), and 224–225 (NS).

It belongs to the ThiG family. In terms of assembly, homotetramer. Forms heterodimers with either ThiH or ThiS.

Its subcellular location is the cytoplasm. The catalysed reaction is [ThiS sulfur-carrier protein]-C-terminal-Gly-aminoethanethioate + 2-iminoacetate + 1-deoxy-D-xylulose 5-phosphate = [ThiS sulfur-carrier protein]-C-terminal Gly-Gly + 2-[(2R,5Z)-2-carboxy-4-methylthiazol-5(2H)-ylidene]ethyl phosphate + 2 H2O + H(+). Its pathway is cofactor biosynthesis; thiamine diphosphate biosynthesis. Catalyzes the rearrangement of 1-deoxy-D-xylulose 5-phosphate (DXP) to produce the thiazole phosphate moiety of thiamine. Sulfur is provided by the thiocarboxylate moiety of the carrier protein ThiS. In vitro, sulfur can be provided by H(2)S. The polypeptide is Thiazole synthase (Parasynechococcus marenigrum (strain WH8102)).